Here is a 422-residue protein sequence, read N- to C-terminus: Gamma-glutamyl phosphate reductase (422 aa).

The protein belongs to the gamma-glutamyl phosphate reductase family.

The protein localises to the cytoplasm. The enzyme catalyses L-glutamate 5-semialdehyde + phosphate + NADP(+) = L-glutamyl 5-phosphate + NADPH + H(+). Its pathway is amino-acid biosynthesis; L-proline biosynthesis; L-glutamate 5-semialdehyde from L-glutamate: step 2/2. Functionally, catalyzes the NADPH-dependent reduction of L-glutamate 5-phosphate into L-glutamate 5-semialdehyde and phosphate. The product spontaneously undergoes cyclization to form 1-pyrroline-5-carboxylate. The sequence is that of Gamma-glutamyl phosphate reductase from Chloroflexus aggregans (strain MD-66 / DSM 9485).